The following is a 265-amino-acid chain: Diphthine synthase (265 aa).

S-adenosyl-L-methionine contacts are provided by residues leucine 10, aspartate 87, valine 90, 115-116 (SI), leucine 166, alanine 209, and histidine 234.

This sequence belongs to the diphthine synthase family. In terms of assembly, homodimer.

The catalysed reaction is 2-[(3S)-amino-3-carboxypropyl]-L-histidyl-[translation elongation factor 2] + 3 S-adenosyl-L-methionine = diphthine-[translation elongation factor 2] + 3 S-adenosyl-L-homocysteine + 3 H(+). Its pathway is protein modification; peptidyl-diphthamide biosynthesis. Its function is as follows. S-adenosyl-L-methionine-dependent methyltransferase that catalyzes the trimethylation of the amino group of the modified target histidine residue in translation elongation factor 2 (EF-2), to form an intermediate called diphthine. The three successive methylation reactions represent the second step of diphthamide biosynthesis. The sequence is that of Diphthine synthase from Pyrococcus horikoshii (strain ATCC 700860 / DSM 12428 / JCM 9974 / NBRC 100139 / OT-3).